The following is a 412-amino-acid chain: MVNISEIPDDSNDGCDPNKKPEEQVLRRSRRIATRNENQNKKPKEEEEEDNRSVSFPIPNELTEACVALIRKCDYPSLSSVSSYFFNLIASSGLYETRSRLGLSETFLYAAIKFPDTNPANWYILHRNKVSSLRLTEVGSLPPVPWGCSVVTVGQEMYVIGGLLDIRRLQLMTLIDCRTHKCRSLPSMKRGRYKAAAGVVDGKIYVIGGFRMRKPDAEWIEVFDLKTQIWESLPGPYPRTSAGSQFSAHAVMEDKLYMLGSKFCLVYEPKRNGEWDASVGATPLKDLWDKTCCVVDDMLYTTDPRRTLGHPIVVYHPKDKTWRPVKGESLWSLPSYFFSKSEMANFGGKLVILGSNKSYVTGDCIGEKGIWCVMIELEKREGGEIWGKVESLDCVLGDINFLSVRLCQTLTI.

The tract at residues 1–55 is disordered; it reads MVNISEIPDDSNDGCDPNKKPEEQVLRRSRRIATRNENQNKKPKEEEEEDNRSVS. Basic and acidic residues predominate over residues 16–26; the sequence is DPNKKPEEQVL. Kelch repeat units follow at residues 156-202, 203-250, 255-291, and 292-345; these read EMYV…VVDG, KIYV…SAHA, KLYM…WDKT, and CCVV…EMAN.

The chain is Kelch repeat-containing protein At1g19470 from Arabidopsis thaliana (Mouse-ear cress).